The sequence spans 348 residues: Dihydroorotate dehydrogenase (quinone) (348 aa).

Residues Ala-60–Lys-64 and Thr-84 contribute to the FMN site. Lys-64 is a substrate binding site. Substrate is bound at residue Asn-109–Phe-113. FMN contacts are provided by Asn-137 and Asn-170. Asn-170 is a binding site for substrate. Ser-173 serves as the catalytic Nucleophile. A substrate-binding site is contributed by Asn-175. Positions 215 and 243 each coordinate FMN. Asn-244–Thr-245 serves as a coordination point for substrate. FMN-binding positions include Gly-266, Gly-295, and Tyr-316 to Ser-317.

Belongs to the dihydroorotate dehydrogenase family. Type 2 subfamily. In terms of assembly, monomer. Requires FMN as cofactor.

It localises to the cell membrane. It catalyses the reaction (S)-dihydroorotate + a quinone = orotate + a quinol. The protein operates within pyrimidine metabolism; UMP biosynthesis via de novo pathway; orotate from (S)-dihydroorotate (quinone route): step 1/1. In terms of biological role, catalyzes the conversion of dihydroorotate to orotate with quinone as electron acceptor. The sequence is that of Dihydroorotate dehydrogenase (quinone) from Nitrosospira multiformis (strain ATCC 25196 / NCIMB 11849 / C 71).